A 266-amino-acid chain; its full sequence is 15-hydroxyprostaglandin dehydrogenase [NAD(+)] (266 aa).

Residues 12–20 (GAAQGIGKA), 36–37 (DW), 63–65 (CDV), and Asn-91 each bind NAD(+). The substrate site is built by Ser-138 and Gln-148. Tyr-151 acts as the Proton acceptor in catalysis. Residues 151-155 (YCASK) and 186-188 (VKT) contribute to the NAD(+) site.

This sequence belongs to the short-chain dehydrogenases/reductases (SDR) family. In terms of assembly, homodimer.

It is found in the cytoplasm. It carries out the reaction prostaglandin E2 + NAD(+) = 15-oxoprostaglandin E2 + NADH + H(+). The enzyme catalyses (15S)-hydroxy-(5Z,8Z,11Z,13E)-eicosatetraenoate + NAD(+) = 15-oxo-(5Z,8Z,11Z,13E)-eicosatetraenoate + NADH + H(+). The catalysed reaction is (11R)-hydroxy-(5Z,8Z,12E,14Z)-eicosatetraenoate + NAD(+) = 11-oxo-(5Z,8Z,12E,14Z)-eicosatetraenoate + NADH + H(+). It catalyses the reaction lipoxin A4 + NAD(+) = 15-oxo-(5S,6R)-dihydroxy-(7E,9E,11Z,13E)-eicosatetraenoate + NADH + H(+). It carries out the reaction 15-oxo-(5S,6R)-dihydroxy-(7E,9E,11Z)-eicosatrienoate + NADH + H(+) = (5S,6R,15S)-trihydroxy-(7E,9E,11Z)-eicosatrienoate + NAD(+). The enzyme catalyses prostaglandin A1 + NAD(+) = 15-oxo-prostaglandin A1 + NADH + H(+). The catalysed reaction is prostaglandin E1 + NAD(+) = 15-oxoprostaglandin E1 + NADH + H(+). It catalyses the reaction 14-hydroxy-(4Z,7Z,10Z,12E,16Z,19Z)-docosahexaenoate + NAD(+) = 14-oxo-(4Z,7Z,10Z,12E,16Z,19Z)-docosahexaenoate + NADH + H(+). It carries out the reaction resolvin E1 + NAD(+) = 18-oxo-resolvin E1 + NADH + H(+). The enzyme catalyses resolvin D1 + NAD(+) = 8-oxoresolvin D1 + NADH + H(+). The catalysed reaction is resolvin D1 + NAD(+) = 17-oxoresolvin D1 + NADH + H(+). It catalyses the reaction resolvin D2 + NAD(+) = 7-oxoresolvin D2 + NADH + H(+). It carries out the reaction resolvin D2 + NAD(+) = 16-oxoresolvin D2 + NADH + H(+). Functionally, catalyzes the NAD-dependent dehydrogenation (oxidation) of a broad array of hydroxylated polyunsaturated fatty acids (mainly eicosanoids and docosanoids, including prostaglandins, lipoxins and resolvins), yielding their corresponding keto (oxo) metabolites. Decreases the levels of the pro-proliferative prostaglandins such as prostaglandin E2 (whose activity is increased in cancer because of an increase in the expression of cyclooxygenase 2) and generates oxo-fatty acid products that can profoundly influence cell function by abrogating pro-inflammatory cytokine expression. Converts resolvins E1, D1 and D2 to their oxo products, which represents a mode of resolvin inactivation. Resolvin E1 plays important roles during the resolution phase of acute inflammation, while resolvins D1 and D2 have a unique role in obesity-induced adipose inflammation. This Rattus norvegicus (Rat) protein is 15-hydroxyprostaglandin dehydrogenase [NAD(+)] (Hpgd).